An 874-amino-acid polypeptide reads, in one-letter code: MGLPTLEFSDSYLDSPDFRERLQCHEIELERTNKFIKELIKDGSLLIGALRNLSMAVQKFSQSLQDFQFECIGDAETDDEISIAQSLKEFARLLIAVEEERRRLIQNANDVLIAPLEKFRKEQIGAAKDGKKKFDKESEKYYSILEKHLNLSAKKKESHLQEADTQIDREHQNFYEASLEYVFKIQEVQEKKKFEFVEPLLSFLQGLFTFYHEGYELAQEFAPYKQQLQFNLQNTRNNFESTRQEVERLMQRMKSANQDYRPPSQWTMEGYLYVQEKRPLGFTWIKHYCTYDKGSKTFTMSVSEMKSSGKMNGLVTSSPEMFKLKSCIRRKTDSIDKRFCFDIEVVERHGIITLQAFSEANRKLWLEAMDGKEPIYTLPAIISKKEEMYLNEAGFNFVRKCIQAVETRGITILGLYRIGGVNSKVQKLMNTTFSPKSPPDIDIDIELWDNKTITSGLKNYLRCLAEPLMTYKLHKDFIIAVKSDDQNYRVEAVHALVHKLPEKNREMLDILIKHLVKVSLHSQQNLMTVSNLGVIFGPTLMRAQEETVAAMMNIKFQNIVVEILIEHYEKIFHTAPDPSIPLPQPQSRSGSRRTRAICLSTGSRKPRGRYTPCLAEPDSDSYSSSPDSTPMGSIESLSSHSSEQNSTTKSASCQPREKSGGIPWIATPSSSNGQKSLGLWTTSPESSSREDATKTDAESDCQSVASVTSPGDVSPPIDLVKKEPYGLSGLKRASASSLRSISAAEGNKSYSGSIQSLTSVGSKETPKASPNPDLPPKMCRRLRLDTASSNGYQRPGSVVAAKAQLFENVGSPKPVSSGRQAKAMYSCKAEHSHELSFPQGAIFSNVYPSVEPGWLKATYEGKTGLVPENYVVFL.

Residues 7 to 262 (EFSDSYLDSP…MKSANQDYRP (256 aa)) enclose the BAR domain. Residues 225–261 (KQQLQFNLQNTRNNFESTRQEVERLMQRMKSANQDYR) adopt a coiled-coil conformation. Residues 265–374 (QWTMEGYLYV…WLEAMDGKEP (110 aa)) enclose the PH domain. Position 376 is a phosphotyrosine (tyrosine 376). Residues 376–572 (YTLPAIISKK…ILIEHYEKIF (197 aa)) form the Rho-GAP domain. Residues 575 to 720 (APDPSIPLPQ…GDVSPPIDLV (146 aa)) are disordered. Residues 620 to 650 (DSYSSSPDSTPMGSIESLSSHSSEQNSTTKS) show a composition bias toward low complexity. A compositionally biased stretch (polar residues) spans 667–686 (TPSSSNGQKSLGLWTTSPES). Serine 683 is subject to Phosphoserine. Basic and acidic residues predominate over residues 687-697 (SSREDATKTDA). A compositionally biased stretch (polar residues) spans 700–711 (DCQSVASVTSPG). Phosphoserine occurs at positions 740, 753, 756, and 811. The segment covering 749–762 (SYSGSIQSLTSVGS) has biased composition (polar residues). The disordered stretch occupies residues 749–777 (SYSGSIQSLTSVGSKETPKASPNPDLPPK). An SH3 domain is found at 816 to 874 (SSGRQAKAMYSCKAEHSHELSFPQGAIFSNVYPSVEPGWLKATYEGKTGLVPENYVVFL). Tyrosine 870 bears the Phosphotyrosine mark.

Highly and selectively expressed in smooth muscle cells.

May influence blood pressure by functioning as a GTPase-activating protein for RHOA in vascular smooth muscle. This Homo sapiens (Human) protein is Rho GTPase-activating protein 42.